The sequence spans 787 residues: Endonuclease MutS2 (787 aa).

335–342 (GPNTGGKT) provides a ligand contact to ATP. Residues 712 to 787 (LDLRGERYED…GLGNTVIELK (76 aa)) form the Smr domain.

Belongs to the DNA mismatch repair MutS family. MutS2 subfamily. As to quaternary structure, homodimer. Binds to stalled ribosomes, contacting rRNA.

Functionally, endonuclease that is involved in the suppression of homologous recombination and thus may have a key role in the control of bacterial genetic diversity. Acts as a ribosome collision sensor, splitting the ribosome into its 2 subunits. Detects stalled/collided 70S ribosomes which it binds and splits by an ATP-hydrolysis driven conformational change. Acts upstream of the ribosome quality control system (RQC), a ribosome-associated complex that mediates the extraction of incompletely synthesized nascent chains from stalled ribosomes and their subsequent degradation. Probably generates substrates for RQC. The chain is Endonuclease MutS2 from Shouchella clausii (strain KSM-K16) (Alkalihalobacillus clausii).